The primary structure comprises 194 residues: dITP/XTP pyrophosphatase (194 aa).

Residue 11-16 (SHNAGK) participates in substrate binding. Aspartate 70 serves as the catalytic Proton acceptor. Aspartate 70 lines the Mg(2+) pocket. Residues serine 71, 149-152 (FGYD), lysine 172, and 177-178 (HR) contribute to the substrate site.

The protein belongs to the HAM1 NTPase family. As to quaternary structure, homodimer. It depends on Mg(2+) as a cofactor.

It carries out the reaction XTP + H2O = XMP + diphosphate + H(+). The enzyme catalyses dITP + H2O = dIMP + diphosphate + H(+). The catalysed reaction is ITP + H2O = IMP + diphosphate + H(+). Its function is as follows. Pyrophosphatase that catalyzes the hydrolysis of nucleoside triphosphates to their monophosphate derivatives, with a high preference for the non-canonical purine nucleotides XTP (xanthosine triphosphate), dITP (deoxyinosine triphosphate) and ITP. Seems to function as a house-cleaning enzyme that removes non-canonical purine nucleotides from the nucleotide pool, thus preventing their incorporation into DNA/RNA and avoiding chromosomal lesions. The protein is dITP/XTP pyrophosphatase of Thermosynechococcus vestitus (strain NIES-2133 / IAM M-273 / BP-1).